The chain runs to 867 residues: DNA endonuclease RBBP8 (867 aa).

Residues 25–48 are essential for binding to the MRN complex and for RPA focus formation on DNA damage; the sequence is ELWSKLKECHDKELQELLLKINKL. 2 coiled-coil regions span residues 38 to 87 and 120 to 141; these read LQEL…EDRL and ITELMNDKNALQDENKRLSEQL. 2 disordered regions span residues 141–171 and 448–486; these read LHNMQKSRWKSDEENPADTGEGEDGVIPDSP and RYGKRKNAEAEQEESCESSFDKENNIPIKDIGSERHSML. Residues 154–166 are compositionally biased toward acidic residues; sequence ENPADTGEGEDGV. The short motif at 489 to 493 is the PXDLS motif element; it reads PLDLS. Positions 508 to 531 are damage-recruitment motif; it reads SSRGRTKQTFALVPEKPDPKKPLH. Phosphothreonine occurs at positions 817 and 829. Positions 843–867 are disordered; the sequence is SPCQRPRRRQPYNAKFSSKIKEQKT.

The protein belongs to the COM1/SAE2/CtIP family. In terms of assembly, homotetramer; formed by antiparallel association of helical extensions protruding from the N-termini of two parallel coiled-coil dimers. Interacts with the MRN complex; the interaction links DNA sensing to resection. Interacts with samhd1. Phosphorylation at Thr-817 and Thr-829 promote interaction with nbn and recruitment to double-strand breaks (DSBs).

Its subcellular location is the nucleus. The protein localises to the chromosome. Its function is as follows. Endonuclease that cooperates with the MRE11-RAD50-NBN (MRN) complex in DNA-end resection, the first step of double-strand break (DSB) repair through the homologous recombination (HR) pathway. Functions downstream of the MRN complex and ATM, promotes ATR activation and its recruitment to DSBs in the S/G2 phase facilitating the generation of ssDNA. Specifically promotes the endonuclease activity of the MRN complex to clear DNA ends containing protein adducts: recruited to DSBs by nbn following phosphorylation, and promotes the endonuclease of mre11 to clear protein-DNA adducts and generate clean double-strand break ends. The protein is DNA endonuclease RBBP8 (rbbp8) of Xenopus tropicalis (Western clawed frog).